The following is a 317-amino-acid chain: MIDIVRWRYAFYLLSLLIIIPGTIYLLLFGLRLGIDFEGGTFWQIQFEKPVRIEDVRSALAQAGYNEAFVQSFGQQSNTAQGTVTRGVSMRLPEIKENSPEKAKLEQILKSRFGNYEELVFTSVGPAVGREIRNRSIVAIALASLGILGYIAFAFRKVSHPFRYGICAIIAMLHDVLVVVGIFAILGKHFGVEIDALFVTALLTVIGFSVHDTIVVFDRIRENQLRRYGESFEQIVNISLLQTLVRSVNTSMTVIFTLLALYFFGGTTIKHFVLALLIGIVSGTYSSIFNASLLLVSWENKDFLRIFRRTEPEAAAT.

6 consecutive transmembrane segments (helical) span residues 11–31 (FYLLSLLIIIPGTIYLLLFGL), 135–155 (RSIVAIALASLGILGYIAFAF), 166–186 (ICAIIAMLHDVLVVVGIFAIL), 197–217 (LFVTALLTVIGFSVHDTIVVF), 244–266 (LVRSVNTSMTVIFTLLALYFFGG), and 276–298 (LLIGIVSGTYSSIFNASLLLVSW).

It belongs to the SecD/SecF family. SecF subfamily. In terms of assembly, forms a complex with SecD. Part of the essential Sec protein translocation apparatus which comprises SecA, SecYEG and auxiliary proteins SecDF. Other proteins may also be involved.

It is found in the cell membrane. In terms of biological role, part of the Sec protein translocase complex. Interacts with the SecYEG preprotein conducting channel. SecDF uses the proton motive force (PMF) to complete protein translocation after the ATP-dependent function of SecA. The chain is Protein translocase subunit SecF from Thermobaculum terrenum (strain ATCC BAA-798 / CCMEE 7001 / YNP1).